The chain runs to 216 residues: Probable Golgi SNAP receptor complex member 2 (216 aa).

Over 1 to 194 (MESLYHQTNN…IERRLVEDRR (194 aa)) the chain is Cytoplasmic. Positions 62–103 (QRQSSKLRVDQLKYDLRHLQTSLQTARERRQRRMQEISEREQ) form a coiled coil. The chain crosses the membrane as a helical; Anchor for type IV membrane protein span at residues 195 to 215 (IFIGGVVVTLLIIALIIYFLV). A topological domain (vesicular) is located at residue L216.

The protein belongs to the GOSR2 family. Part of a unique SNARE complex.

The protein localises to the golgi apparatus. It localises to the cis-Golgi network membrane. Its subcellular location is the golgi apparatus membrane. The protein resides in the endoplasmic reticulum membrane. Involved in transport of proteins from the cis/medial-Golgi to the trans-Golgi network. The polypeptide is Probable Golgi SNAP receptor complex member 2 (Drosophila melanogaster (Fruit fly)).